A 464-amino-acid polypeptide reads, in one-letter code: UDP-N-acetylmuramoylalanine--D-glutamate ligase (464 aa).

ATP is bound at residue 112-118 (GTDGKTT).

The protein belongs to the MurCDEF family.

Its subcellular location is the cytoplasm. It carries out the reaction UDP-N-acetyl-alpha-D-muramoyl-L-alanine + D-glutamate + ATP = UDP-N-acetyl-alpha-D-muramoyl-L-alanyl-D-glutamate + ADP + phosphate + H(+). Its pathway is cell wall biogenesis; peptidoglycan biosynthesis. Its function is as follows. Cell wall formation. Catalyzes the addition of glutamate to the nucleotide precursor UDP-N-acetylmuramoyl-L-alanine (UMA). This is UDP-N-acetylmuramoylalanine--D-glutamate ligase from Chlorobium chlorochromatii (strain CaD3).